The chain runs to 378 residues: Chlorophyll synthase, chloroplastic (378 aa).

The N-terminal 45 residues, 1–45 (MATSHPLAAAAATSSSSATFRPPLRFLSSPPSSLTLNRRRSFPVV), are a transit peptide targeting the chloroplast. 7 consecutive transmembrane segments (helical) span residues 173–193 (VITQ…LLDI), 199–219 (FPII…YSAP), 232–252 (FALG…LFGT), 257–277 (IVVL…VNDF), 302–322 (WICV…LLST), 327–347 (YALA…QYFL), and 357–377 (YQAS…LATS).

The protein belongs to the UbiA prenyltransferase family. Chlorophyll synthase subfamily. It depends on Mg(2+) as a cofactor. Zn(2+) serves as cofactor. Mn(2+) is required as a cofactor.

It localises to the plastid. Its subcellular location is the chloroplast membrane. It carries out the reaction phytyl diphosphate + chlorophyllide a + H(+) = chlorophyll a + diphosphate. Its activity is regulated as follows. Inhibited by N-phenylmaleimide (NPM) and diacetyl. Its function is as follows. Involved in one of the last steps of the biosynthesis of chlorophyll a. Catalyzes the esterification of chlorophillide a with either geranylgeranyldiphosphate (GGPP) or phytyldiphosphate (PhyPP). May also use with a lower efficiency the monophosphates GGMP and PhyMP, but not the non-phosphorylated alcohols geranylgeraniol and phytol. The tetraprenyl diphosphate must bind to the enzyme as the first substrate and esterification occurs when this pre-loaded enzyme meets the second substrate, chlorophyllide. In Avena sativa (Oat), this protein is Chlorophyll synthase, chloroplastic (CHLG).